Here is a 706-residue protein sequence, read N- to C-terminus: Semenogelin-2 (706 aa).

The signal sequence occupies residues 1–23 (MKSIILFVLSLLLILEKQAAVMG). 3 disordered regions span residues 25 to 62 (KGGS…SKGS), 131 to 156 (KGGQ…KGIF), and 276 to 678 (NLNQ…SGAH). Basic and acidic residues predominate over residues 50–59 (GQKDKQHTES). The span at 137–151 (HGTQNPSQDQGNSPS) shows a compositional bias: polar residues. Residues 297 to 308 (TEERQPNHEENS) show a composition bias toward basic and acidic residues. Over residues 329–339 (KSQNQVTIPSQ) the composition is skewed to polar residues. Positions 340–349 (DQEHGHKENK) are enriched in basic and acidic residues. The span at 389–399 (KSQNQVTIPSQ) shows a compositional bias: polar residues. The segment covering 400–409 (DQEHGHKENK) has biased composition (basic and acidic residues). Over residues 449–459 (KSQNQVTIPSQ) the composition is skewed to polar residues. The segment covering 460-469 (DQEHGHKENK) has biased composition (basic and acidic residues). The segment covering 509 to 519 (KSQNQVAIPSQ) has biased composition (polar residues). Residues 520–529 (DQEHGHKENK) show a composition bias toward basic and acidic residues. Residues 569 to 579 (KSQNQVTIPSQ) show a composition bias toward polar residues. The span at 580–589 (DQEHGHKENK) shows a compositional bias: basic and acidic residues. Polar residues-rich tracts occupy residues 611 to 622 (KDVSQSSLSFQT) and 630 to 653 (SQIQ…NSGK). The segment covering 654-670 (SADREQDLLSHEQEGRY) has biased composition (basic and acidic residues).

The protein belongs to the semenogelin family. As to quaternary structure, interacts with SERPINA5.

The protein localises to the secreted. Its function is as follows. Participates in the formation of a gel matrix (sperm coagulum) entrapping the accessory gland secretions and ejaculated spermatozoa. The protein is Semenogelin-2 (SEMG2) of Macaca mulatta (Rhesus macaque).